The chain runs to 132 residues: Small ribosomal subunit protein uS8c (132 aa).

The protein belongs to the universal ribosomal protein uS8 family. Part of the 30S ribosomal subunit.

The protein localises to the plastid. It localises to the chloroplast. One of the primary rRNA binding proteins, it binds directly to 16S rRNA central domain where it helps coordinate assembly of the platform of the 30S subunit. The polypeptide is Small ribosomal subunit protein uS8c (rps8) (Liriodendron tulipifera (Tuliptree)).